The sequence spans 461 residues: Cysteine--tRNA ligase (461 aa).

Cys-28 lines the Zn(2+) pocket. The 'HIGH' region signature appears at 30-40 (ITIYDLCHIGH). Zn(2+)-binding residues include Cys-209, His-234, and Glu-238. The 'KMSKS' region signature appears at 266-270 (KMSKS). Lys-269 serves as a coordination point for ATP.

This sequence belongs to the class-I aminoacyl-tRNA synthetase family. As to quaternary structure, monomer. Zn(2+) serves as cofactor.

It is found in the cytoplasm. It catalyses the reaction tRNA(Cys) + L-cysteine + ATP = L-cysteinyl-tRNA(Cys) + AMP + diphosphate. The sequence is that of Cysteine--tRNA ligase from Yersinia pestis bv. Antiqua (strain Antiqua).